Reading from the N-terminus, the 227-residue chain is Cytochrome c oxidase subunit 2 (227 aa).

At 1 to 14 (MAYPFQLGFQDATS) the chain is on the mitochondrial intermembrane side. The helical transmembrane segment at 15 to 45 (PIMEELLHFHDHTLMIVFLISSLVLYIITLM) threads the bilayer. The Mitochondrial matrix portion of the chain corresponds to 46-59 (LTTKLTHTSTMDAQ). Residues 60–87 (EVETVWTILPAIILILIALPSLRILYMM) form a helical membrane-spanning segment. At 88–227 (DEVNNPSLTV…FFEKWSASML (140 aa)) the chain is on the mitochondrial intermembrane side. Residues His161, Cys196, Glu198, Cys200, His204, and Met207 each coordinate Cu cation. Glu198 provides a ligand contact to Mg(2+).

It belongs to the cytochrome c oxidase subunit 2 family. As to quaternary structure, component of the cytochrome c oxidase (complex IV, CIV), a multisubunit enzyme composed of 14 subunits. The complex is composed of a catalytic core of 3 subunits MT-CO1, MT-CO2 and MT-CO3, encoded in the mitochondrial DNA, and 11 supernumerary subunits COX4I, COX5A, COX5B, COX6A, COX6B, COX6C, COX7A, COX7B, COX7C, COX8 and NDUFA4, which are encoded in the nuclear genome. The complex exists as a monomer or a dimer and forms supercomplexes (SCs) in the inner mitochondrial membrane with NADH-ubiquinone oxidoreductase (complex I, CI) and ubiquinol-cytochrome c oxidoreductase (cytochrome b-c1 complex, complex III, CIII), resulting in different assemblies (supercomplex SCI(1)III(2)IV(1) and megacomplex MCI(2)III(2)IV(2)). Found in a complex with TMEM177, COA6, COX18, COX20, SCO1 and SCO2. Interacts with TMEM177 in a COX20-dependent manner. Interacts with COX20. Interacts with COX16. It depends on Cu cation as a cofactor.

It localises to the mitochondrion inner membrane. The catalysed reaction is 4 Fe(II)-[cytochrome c] + O2 + 8 H(+)(in) = 4 Fe(III)-[cytochrome c] + 2 H2O + 4 H(+)(out). Its function is as follows. Component of the cytochrome c oxidase, the last enzyme in the mitochondrial electron transport chain which drives oxidative phosphorylation. The respiratory chain contains 3 multisubunit complexes succinate dehydrogenase (complex II, CII), ubiquinol-cytochrome c oxidoreductase (cytochrome b-c1 complex, complex III, CIII) and cytochrome c oxidase (complex IV, CIV), that cooperate to transfer electrons derived from NADH and succinate to molecular oxygen, creating an electrochemical gradient over the inner membrane that drives transmembrane transport and the ATP synthase. Cytochrome c oxidase is the component of the respiratory chain that catalyzes the reduction of oxygen to water. Electrons originating from reduced cytochrome c in the intermembrane space (IMS) are transferred via the dinuclear copper A center (CU(A)) of subunit 2 and heme A of subunit 1 to the active site in subunit 1, a binuclear center (BNC) formed by heme A3 and copper B (CU(B)). The BNC reduces molecular oxygen to 2 water molecules using 4 electrons from cytochrome c in the IMS and 4 protons from the mitochondrial matrix. This is Cytochrome c oxidase subunit 2 (MT-CO2) from Balaenoptera musculus (Blue whale).